The sequence spans 366 residues: Acetylserotonin O-methyltransferase 3 (366 aa).

S-adenosyl-L-homocysteine is bound by residues glycine 209, aspartate 232, aspartate 253, and lysine 267. The active-site Proton acceptor is the histidine 271. Catalysis depends on residues glutamate 302 and glutamate 332.

Belongs to the class I-like SAM-binding methyltransferase superfamily. Cation-independent O-methyltransferase family. As to quaternary structure, homodimer. In terms of tissue distribution, expressed at low levels in roots, shoots, leaves, stems and flowers.

Its subcellular location is the cytoplasm. It catalyses the reaction N-acetylserotonin + S-adenosyl-L-methionine = melatonin + S-adenosyl-L-homocysteine + H(+). It functions in the pathway aromatic compound metabolism; melatonin biosynthesis; melatonin from serotonin: step 1/2. Its function is as follows. Methyltransferase which catalyzes the transfer of a methyl group onto N-acetylserotonin, producing melatonin (N-acetyl-5-methoxytryptamine). This is Acetylserotonin O-methyltransferase 3 from Oryza sativa subsp. japonica (Rice).